The following is a 247-amino-acid chain: Geranylgeranylglyceryl phosphate synthase (247 aa).

The Mg(2+) site is built by Asp23 and Ser52. Sn-glycerol 1-phosphate-binding positions include 171 to 177, 203 to 204, and 225 to 226; these read YLEAGSG, GG, and GT.

This sequence belongs to the GGGP/HepGP synthase family. Group II subfamily. Requires Mg(2+) as cofactor.

It is found in the cytoplasm. It carries out the reaction sn-glycerol 1-phosphate + (2E,6E,10E)-geranylgeranyl diphosphate = sn-3-O-(geranylgeranyl)glycerol 1-phosphate + diphosphate. It functions in the pathway membrane lipid metabolism; glycerophospholipid metabolism. In terms of biological role, prenyltransferase that catalyzes the transfer of the geranylgeranyl moiety of geranylgeranyl diphosphate (GGPP) to the C3 hydroxyl of sn-glycerol-1-phosphate (G1P). This reaction is the first ether-bond-formation step in the biosynthesis of archaeal membrane lipids. The protein is Geranylgeranylglyceryl phosphate synthase of Methanococcoides burtonii (strain DSM 6242 / NBRC 107633 / OCM 468 / ACE-M).